Consider the following 105-residue polypeptide: Guanyl-specific ribonuclease Ms (105 aa).

Disulfide bonds link Cys-3–Cys-11 and Cys-7–Cys-102. His-39 is an active-site residue. Residue Glu-57 is the Proton acceptor of the active site. The active-site Proton donor is His-91.

Belongs to the ribonuclease N1/T1 family.

It carries out the reaction [RNA] containing guanosine + H2O = an [RNA fragment]-3'-guanosine-3'-phosphate + a 5'-hydroxy-ribonucleotide-3'-[RNA fragment].. The protein is Guanyl-specific ribonuclease Ms of Aspergillus phoenicis (Aspergillus saitoi).